The primary structure comprises 116 residues: NADPH-dependent 7-cyano-7-deazaguanine reductase (116 aa).

The active-site Thioimide intermediate is Cys-31. The active-site Proton donor is the Asp-38. Substrate contacts are provided by residues 53 to 55 and 72 to 73; these read VEL and YE.

The protein belongs to the GTP cyclohydrolase I family. QueF type 1 subfamily.

Its subcellular location is the cytoplasm. It carries out the reaction 7-aminomethyl-7-carbaguanine + 2 NADP(+) = 7-cyano-7-deazaguanine + 2 NADPH + 3 H(+). The protein operates within tRNA modification; tRNA-queuosine biosynthesis. Catalyzes the NADPH-dependent reduction of 7-cyano-7-deazaguanine (preQ0) to 7-aminomethyl-7-deazaguanine (preQ1). This is NADPH-dependent 7-cyano-7-deazaguanine reductase from Chlorobium phaeobacteroides (strain DSM 266 / SMG 266 / 2430).